The following is a 234-amino-acid chain: Two-component response regulator ARR9 (234 aa).

One can recognise a Response regulatory domain in the interval 10 to 147 (HVLAVDDSLF…DLNKLKPHMM (138 aa)). Position 80 is a 4-aspartylphosphate (D80).

It belongs to the ARR family. Type-A subfamily. In terms of assembly, interacts with AHP1 and AHP3. Two-component system major event consists of a His-to-Asp phosphorelay between a sensor histidine kinase (HK) and a response regulator (RR). In plants, the His-to-Asp phosphorelay involves an additional intermediate named Histidine-containing phosphotransfer protein (HPt). This multistep phosphorelay consists of a His-Asp-His-Asp sequential transfer of a phosphate group between first a His and an Asp of the HK protein, followed by the transfer to a conserved His of the HPt protein and finally the transfer to an Asp in the receiver domain of the RR protein. In terms of tissue distribution, predominantly expressed in roots.

It localises to the nucleus. Functions as a response regulator involved in His-to-Asp phosphorelay signal transduction system. Phosphorylation of the Asp residue in the receiver domain activates the ability of the protein to promote the transcription of target genes. Type-A response regulators seem to act as negative regulators of the cytokinin signaling. This Arabidopsis thaliana (Mouse-ear cress) protein is Two-component response regulator ARR9 (ARR9).